A 60-amino-acid polypeptide reads, in one-letter code: Large ribosomal subunit protein bL32 (60 aa).

Positions 1–22 (MAVPARHTSKAKKNKRRTHYKL) are disordered. Over residues 7-20 (HTSKAKKNKRRTHY) the composition is skewed to basic residues.

Belongs to the bacterial ribosomal protein bL32 family.

This Streptococcus pyogenes serotype M3 (strain ATCC BAA-595 / MGAS315) protein is Large ribosomal subunit protein bL32.